A 394-amino-acid chain; its full sequence is Phosphoglycerate kinase (394 aa).

Substrate is bound by residues 21-23 (DFN), R36, 59-62 (HLGR), R118, and R151. Residue S183 is modified to Phosphoserine. K201 is a binding site for ATP. Position 299 is a phosphothreonine (T299). Residues E323 and 350-353 (GGDS) contribute to the ATP site.

Belongs to the phosphoglycerate kinase family. In terms of assembly, monomer.

It localises to the cytoplasm. It catalyses the reaction (2R)-3-phosphoglycerate + ATP = (2R)-3-phospho-glyceroyl phosphate + ADP. It participates in carbohydrate degradation; glycolysis; pyruvate from D-glyceraldehyde 3-phosphate: step 2/5. This Bacillus pumilus (strain SAFR-032) protein is Phosphoglycerate kinase.